A 772-amino-acid chain; its full sequence is Carnitine O-palmitoyltransferase 1, muscle isoform (772 aa).

The Cytoplasmic portion of the chain corresponds to 1 to 47; the sequence is MAEAHQAVAFQFTVTPEGVDFRLSREALKHIYLSGINSWKKRLIRIK. Residues 48-73 traverse the membrane as a helical segment; that stretch reads NGILRGVYPGSPTSWLVVASATAGSS. Topologically, residues 74 to 102 are mitochondrial intermembrane; the sequence is YYNVDISMGLVNHIQRCLPERYGPYWTPQ. A helical transmembrane segment spans residues 103–122; the sequence is TRALLSMAVVSTGVWMIGIF. The Cytoplasmic portion of the chain corresponds to 123 to 772; sequence FFRQTLKLLL…DLFQVPKTDS (650 aa). His-473 serves as the catalytic Proton acceptor. 555–567 is a binding site for CoA; it reads GKGLIKKCRTSPD. Tyr-589 and Thr-602 together coordinate (R)-carnitine.

This sequence belongs to the carnitine/choline acetyltransferase family.

It is found in the mitochondrion outer membrane. It catalyses the reaction (R)-carnitine + hexadecanoyl-CoA = O-hexadecanoyl-(R)-carnitine + CoA. The protein operates within lipid metabolism; fatty acid beta-oxidation. Its function is as follows. Catalyzes the transfer of the acyl group of long-chain fatty acid-CoA conjugates onto carnitine, an essential step for the mitochondrial uptake of long-chain fatty acids and their subsequent beta-oxidation in the mitochondrion. The polypeptide is Carnitine O-palmitoyltransferase 1, muscle isoform (CPT1B) (Sus scrofa (Pig)).